The sequence spans 247 residues: GTP cyclohydrolase 1 type 2 homolog (247 aa).

5 residues coordinate a divalent metal cation: His-63, His-64, Asp-101, His-215, and Glu-219.

Belongs to the GTP cyclohydrolase I type 2/NIF3 family. In terms of assembly, homohexamer.

The sequence is that of GTP cyclohydrolase 1 type 2 homolog from Yersinia pestis.